Consider the following 555-residue polypeptide: Sesquiterpene synthase 31 (555 aa).

Residues Asp308, Asp312, Asp451, Thr455, and Glu459 each coordinate Mg(2+). The DDXXD motif signature appears at 308-312; it reads DDTFD.

It belongs to the terpene synthase family. Tpsa subfamily. Requires Mg(2+) as cofactor. The cofactor is Mn(2+). As to expression, expressed in stem and leaf trichomes. Detected in roots, fruits and flowers.

It is found in the cytoplasm. The enzyme catalyses (2E,6E)-farnesyl diphosphate = viridiflorene + diphosphate. It functions in the pathway secondary metabolite biosynthesis; terpenoid biosynthesis. Its function is as follows. Sesquiterpene synthase involved in the production of viridiflorene from (E,E)-farnesyl diphosphate (FPP). Has no activity with (Z,Z)-FPP. Can act with a low efficiency as a monoterpene synthase with geranyl diphosphate as substrate. This Solanum lycopersicum (Tomato) protein is Sesquiterpene synthase 31.